We begin with the raw amino-acid sequence, 154 residues long: Aspartate 1-decarboxylase 1 (154 aa).

Serine 26 functions as the Schiff-base intermediate with substrate; via pyruvic acid in the catalytic mechanism. At serine 26 the chain carries Pyruvic acid (Ser). Threonine 58 contacts substrate. The Proton donor role is filled by tyrosine 59. Residue 74–76 participates in substrate binding; that stretch reads GAA. A disordered region spans residues 129–154; that stretch reads VGLVRGDTNSPQPSLSEQAGDPRRAQ. The segment covering 135–145 has biased composition (polar residues); that stretch reads DTNSPQPSLSE.

This sequence belongs to the PanD family. In terms of assembly, heterooctamer of four alpha and four beta subunits. Pyruvate is required as a cofactor. Post-translationally, is synthesized initially as an inactive proenzyme, which is activated by self-cleavage at a specific serine bond to produce a beta-subunit with a hydroxyl group at its C-terminus and an alpha-subunit with a pyruvoyl group at its N-terminus.

The protein resides in the cytoplasm. The enzyme catalyses L-aspartate + H(+) = beta-alanine + CO2. It participates in cofactor biosynthesis; (R)-pantothenate biosynthesis; beta-alanine from L-aspartate: step 1/1. In terms of biological role, catalyzes the pyruvoyl-dependent decarboxylation of aspartate to produce beta-alanine. The polypeptide is Aspartate 1-decarboxylase 1 (Frankia casuarinae (strain DSM 45818 / CECT 9043 / HFP020203 / CcI3)).